The chain runs to 355 residues: MAEKAENLPSSSAEASEEPSPQTGPNVNQKPSILVLGMAGSGKTTFVQRLTAFLHARKTPPYVINLDPAVSKVPYPVNVDIRDTVKYKEVMKEFGMGPNGAIMTCLNLMCTRFDKVIELINKRSSDFSVCLLDTPGQIEAFTWSASGSIITDSLASSHPTVVMYIVDSARATNPTTFMSNMLYACSILYRTKLPFIVVFNKADIVKPTFALKWMQDFERFDEALEDARSSYMNDLSRSLSLVLDEFYCGLKTVCVSSATGEGFEDVMTAIDESVEAYKKEYVPMYEKVLAEKKLLDEEERKKRDEETLKGKAVHDLNKVANPDEFLESELNSKIDRIHLGGVDEENEEDAELERS.

Positions 1 to 30 are disordered; that stretch reads MAEKAENLPSSSAEASEEPSPQTGPNVNQK. Low complexity predominate over residues 9 to 21; it reads PSSSAEASEEPSP. 40–45 is a GTP binding site; sequence GSGKTT. The Gly-Pro-Asn (GPN)-loop; involved in dimer interface motif lies at 97-99; it reads GPN. A GTP-binding site is contributed by 200–203; sequence NKAD. A coiled-coil region spans residues 286–311; that stretch reads EKVLAEKKLLDEEERKKRDEETLKGK.

The protein belongs to the GPN-loop GTPase family. Heterodimer with GPN3. Binds to RNA polymerase II (RNAPII).

The protein resides in the cytoplasm. It is found in the nucleus. Small GTPase required for proper nuclear import of RNA polymerase II (RNAPII). May act at an RNAP assembly step prior to nuclear import. The chain is GPN-loop GTPase 1 from Caenorhabditis elegans.